The chain runs to 513 residues: Bifunctional purine biosynthesis protein PurH (513 aa).

The MGS-like domain occupies 1 to 145 (MTKRALISVS…KNYQDVTAVV (145 aa)).

Belongs to the PurH family.

The catalysed reaction is (6R)-10-formyltetrahydrofolate + 5-amino-1-(5-phospho-beta-D-ribosyl)imidazole-4-carboxamide = 5-formamido-1-(5-phospho-D-ribosyl)imidazole-4-carboxamide + (6S)-5,6,7,8-tetrahydrofolate. It carries out the reaction IMP + H2O = 5-formamido-1-(5-phospho-D-ribosyl)imidazole-4-carboxamide. It participates in purine metabolism; IMP biosynthesis via de novo pathway; 5-formamido-1-(5-phospho-D-ribosyl)imidazole-4-carboxamide from 5-amino-1-(5-phospho-D-ribosyl)imidazole-4-carboxamide (10-formyl THF route): step 1/1. The protein operates within purine metabolism; IMP biosynthesis via de novo pathway; IMP from 5-formamido-1-(5-phospho-D-ribosyl)imidazole-4-carboxamide: step 1/1. In Enterococcus faecalis (strain ATCC 700802 / V583), this protein is Bifunctional purine biosynthesis protein PurH.